A 414-amino-acid polypeptide reads, in one-letter code: CCA-adding enzyme (414 aa).

Positions 8 and 11 each coordinate ATP. Residues Gly8 and Arg11 each coordinate CTP. Residues Asp21 and Asp23 each contribute to the Mg(2+) site. ATP-binding residues include Arg91, Arg137, and Arg140. Arg91, Arg137, and Arg140 together coordinate CTP.

The protein belongs to the tRNA nucleotidyltransferase/poly(A) polymerase family. Bacterial CCA-adding enzyme type 2 subfamily. Requires Mg(2+) as cofactor.

The catalysed reaction is a tRNA precursor + 2 CTP + ATP = a tRNA with a 3' CCA end + 3 diphosphate. The enzyme catalyses a tRNA with a 3' CCA end + 2 CTP + ATP = a tRNA with a 3' CCACCA end + 3 diphosphate. Catalyzes the addition and repair of the essential 3'-terminal CCA sequence in tRNAs without using a nucleic acid template. Adds these three nucleotides in the order of C, C, and A to the tRNA nucleotide-73, using CTP and ATP as substrates and producing inorganic pyrophosphate. tRNA 3'-terminal CCA addition is required both for tRNA processing and repair. Also involved in tRNA surveillance by mediating tandem CCA addition to generate a CCACCA at the 3' terminus of unstable tRNAs. While stable tRNAs receive only 3'-terminal CCA, unstable tRNAs are marked with CCACCA and rapidly degraded. This Buchnera aphidicola subsp. Acyrthosiphon pisum (strain 5A) protein is CCA-adding enzyme.